The primary structure comprises 331 residues: Ribosomal RNA small subunit methyltransferase H (331 aa).

Residues glycine 39 to tyrosine 41, aspartate 56, phenylalanine 83, aspartate 100, and glutamine 107 contribute to the S-adenosyl-L-methionine site.

This sequence belongs to the methyltransferase superfamily. RsmH family.

The protein resides in the cytoplasm. The catalysed reaction is cytidine(1402) in 16S rRNA + S-adenosyl-L-methionine = N(4)-methylcytidine(1402) in 16S rRNA + S-adenosyl-L-homocysteine + H(+). Specifically methylates the N4 position of cytidine in position 1402 (C1402) of 16S rRNA. The sequence is that of Ribosomal RNA small subunit methyltransferase H from Bartonella bacilliformis (strain ATCC 35685 / KC583 / Herrer 020/F12,63).